Here is a 630-residue protein sequence, read N- to C-terminus: MFAARFDPTKVTENVLTAEVTQIKEPTVPQKRKRDAETDDEGSGEDDASSSEDDASSSEDDSDTISEQDENKVASVAPTETSQQSVDAKHSSVLNRFQQTLSLQGALSASDKVSSDNDVHDEDVSMKDVHSLTPIPQPAKVTNEALKLLDPSTYKSTAWDAATKIHYDSKMVKQFDSYEGELDARLLKNITSNFSSETFPIQTILFDKVLPLLNSSFKANRKLFTRRVGDILVNASTGSGKTLAYSVPLVQILRSRTVNKVRAIILVPTKILIHQVYDCLSKLSQGTSLNVSMSKLENSLKEEHNKFLYNSPDILIITPGRLVDHLQMESFDLKTLKFLVLDEADRLLNQSFQNWNQVLFHHLTNDKQDKRPGNVIKMVFSATLTTNAEKLYNLYLHNPKIFLTDSVKLYSIPKKLQELNVNIPTAKSLFKPLLLLRIIHDIKSSASRNAKILVFVKSNEASIRLESLLHAMLGSGIIEDEYNMFLSSIHSNISKGSSRKLIQEFASSEQKKSVLISTDIMARGIDINEITHVINYDLPISSQQYVHRCGRTARANTEGIAINLLVGKGEQKFWSQHIDTDLSRDIDGYQPSAYLDEEKLSELFSIEDTLKDTYKGCIKQLQTSKEADSK.

The segment at 1 to 91 is disordered; that stretch reads MFAARFDPTK…SQQSVDAKHS (91 aa). Residues 37–68 are compositionally biased toward acidic residues; it reads ETDDEGSGEDDASSSEDDASSSEDDSDTISEQ. Over residues 78-91 the composition is skewed to polar residues; the sequence is PTETSQQSVDAKHS. The Q motif signature appears at 198–206; that stretch reads TFPIQTILF. The Helicase ATP-binding domain occupies 222–402; sequence KLFTRRVGDI…NLYLHNPKIF (181 aa). ATP is bound at residue 235 to 242; sequence ASTGSGKT. The DEAD box motif lies at 342 to 345; the sequence is DEAD. One can recognise a Helicase C-terminal domain in the interval 434–601; the sequence is LLLRIIHDIK…SAYLDEEKLS (168 aa).

This sequence belongs to the DEAD box helicase family. DDX51/DBP6 subfamily. Associated with pre-ribosomal particles.

Its subcellular location is the nucleus. It is found in the nucleolus. It catalyses the reaction ATP + H2O = ADP + phosphate + H(+). In terms of biological role, ATP-binding RNA helicase involved in the biogenesis of 60S ribosomal subunits and is required for the normal formation of 25S and 5.8S rRNAs. This is ATP-dependent RNA helicase DBP6 (DBP6) from Kluyveromyces lactis (strain ATCC 8585 / CBS 2359 / DSM 70799 / NBRC 1267 / NRRL Y-1140 / WM37) (Yeast).